The chain runs to 124 residues: Small ribosomal subunit protein uS12 (124 aa).

Aspartate 89 bears the 3-methylthioaspartic acid mark.

Belongs to the universal ribosomal protein uS12 family. In terms of assembly, part of the 30S ribosomal subunit. Contacts proteins S8 and S17. May interact with IF1 in the 30S initiation complex.

In terms of biological role, with S4 and S5 plays an important role in translational accuracy. Its function is as follows. Interacts with and stabilizes bases of the 16S rRNA that are involved in tRNA selection in the A site and with the mRNA backbone. Located at the interface of the 30S and 50S subunits, it traverses the body of the 30S subunit contacting proteins on the other side and probably holding the rRNA structure together. The combined cluster of proteins S8, S12 and S17 appears to hold together the shoulder and platform of the 30S subunit. This chain is Small ribosomal subunit protein uS12, found in Haemophilus ducreyi (strain 35000HP / ATCC 700724).